A 287-amino-acid chain; its full sequence is uncharacterized protein (287 aa).

The region spanning S115–S287 is the ATP-grasp domain.

This is an uncharacterized protein from Mycoplasma genitalium (strain ATCC 33530 / DSM 19775 / NCTC 10195 / G37) (Mycoplasmoides genitalium).